Here is a 474-residue protein sequence, read N- to C-terminus: PTS system MurNAc-GlcNAc-specific EIIBC component (474 aa).

A PTS EIIB type-1 domain is found at 5–87 (ERLAKDITHA…ADQSGATLAE (83 aa)). Cysteine 27 functions as the Phosphocysteine intermediate; for EIIB activity in the catalytic mechanism. Residues 124–474 (KSIANIFIPL…GTTKEMRNPE (351 aa)) form the PTS EIIC type-1 domain. Helical transmembrane passes span 129-149 (IFIP…IAAI), 167-187 (IVTV…IFTG), 193-213 (VFGA…LTGI), 228-248 (LAAG…LSMV), 268-288 (ITLL…AGFV), 299-319 (IIGV…LPLV), 343-363 (LLPI…ALWV), 378-398 (ALPV…TLPL), 402-422 (FFTA…IGHI), and 444-464 (LGYI…TYFF).

The protein localises to the cell membrane. It carries out the reaction N-acetyl-beta-D-muramate-(1-&gt;4)-N-acetyl-D-glucosamine(out) + N(pros)-phospho-L-histidyl-[protein] = 6-phospho-N-acetyl-beta-D-muramate-(1-&gt;4)-N-acetyl-D-glucosamine(in) + L-histidyl-[protein]. It participates in cell wall biogenesis; peptidoglycan recycling. Its function is as follows. The phosphoenolpyruvate-dependent sugar phosphotransferase system (sugar PTS), a major carbohydrate active transport system, catalyzes the phosphorylation of incoming sugar substrates concomitantly with their translocation across the cell membrane. This system is involved in the uptake and phosphorylation of MurNAc-GlcNAc, the principle peptidoglycan turnover product of S.aureus, yielding cytoplasmic MurNAc 6P-GlcNAc. This chain is PTS system MurNAc-GlcNAc-specific EIIBC component, found in Staphylococcus epidermidis (strain ATCC 35984 / DSM 28319 / BCRC 17069 / CCUG 31568 / BM 3577 / RP62A).